We begin with the raw amino-acid sequence, 172 residues long: Transcriptional activator protein (172 aa).

A Nuclear localization signal motif is present at residues K56–R71. A zinc finger spans residues C76 to H93. Residues D119–K172 form a disordered region. Residues N137–S152 are compositionally biased toward polar residues. Residues S158–K172 form a transactivation region.

Belongs to the geminiviridae transcriptional activator protein family. In terms of assembly, monomer. Homodimer. Homooligomer. Self-interaction correlates with nuclear localization and efficient activation of transcription. Monomers suppress local silencing by interacting with and inactivating host adenosine kinase 2 (ADK2) in the cytoplasm. Interacts with and inhibits host SNF1 kinase. Binds to ssDNA. Post-translationally, phosphorylated.

It localises to the host nucleus. Its subcellular location is the host cytoplasm. Strong activator of the late viral genes promoters. Enhances the expression of the capsid protein and nuclear shuttle protein. Acts as a suppressor of RNA-mediated gene silencing, also known as post-transcriptional gene silencing (PTGS), a mechanism of plant viral defense that limits the accumulation of viral RNAs. Suppresses the host RNA silencing by inhibiting adenosine kinase 2 (ADK2), a kinase involved in a general methylation pathway. Also suppresses the host basal defense by interacting with and inhibiting SNF1 kinase, a key regulator of cell metabolism implicated in innate antiviral defense. Determines pathogenicity. The polypeptide is Transcriptional activator protein (Bean golden yellow mosaic virus (isolate Puerto Rico) (BGYMV)).